Here is a 400-residue protein sequence, read N- to C-terminus: Nicotinate phosphoribosyltransferase (400 aa).

Phosphohistidine; by autocatalysis is present on H220.

Belongs to the NAPRTase family. Transiently phosphorylated on a His residue during the reaction cycle. Phosphorylation strongly increases the affinity for substrates and increases the rate of nicotinate D-ribonucleotide production. Dephosphorylation regenerates the low-affinity form of the enzyme, leading to product release.

It carries out the reaction nicotinate + 5-phospho-alpha-D-ribose 1-diphosphate + ATP + H2O = nicotinate beta-D-ribonucleotide + ADP + phosphate + diphosphate. It functions in the pathway cofactor biosynthesis; NAD(+) biosynthesis; nicotinate D-ribonucleotide from nicotinate: step 1/1. Catalyzes the synthesis of beta-nicotinate D-ribonucleotide from nicotinate and 5-phospho-D-ribose 1-phosphate at the expense of ATP. The sequence is that of Nicotinate phosphoribosyltransferase from Salmonella choleraesuis (strain SC-B67).